Consider the following 49-residue polypeptide: U-theraphotoxin-Lk2a (49 aa).

4 disulfides stabilise this stretch: Cys4–Cys17, Cys8–Cys41, Cys22–Cys24, and Cys35–Cys46.

It belongs to the neurotoxin 12 (Hwtx-2) family. 04 (lasiotoxin) subfamily. As to expression, expressed by the venom gland.

The protein resides in the secreted. Toxin that causes irreversible contractile paralysis into adult Aedes aegypti resulting in 100% mortality after 24 hours. The chain is U-theraphotoxin-Lk2a from Lasiodora klugi (Bahia scarlet tarantula).